A 225-amino-acid polypeptide reads, in one-letter code: Ureidoacrylate amidohydrolase RutB (225 aa).

The Proton acceptor role is filled by aspartate 22. The active site involves lysine 131. Cysteine 164 (nucleophile) is an active-site residue.

This sequence belongs to the isochorismatase family. RutB subfamily.

The catalysed reaction is (Z)-3-ureidoacrylate + H2O + H(+) = (Z)-3-aminoacrylate + NH4(+) + CO2. It catalyses the reaction (Z)-3-ureidoacrylate + H2O = (Z)-3-aminoacrylate + carbamate + H(+). The enzyme catalyses (Z)-2-methylureidoacrylate + H2O + H(+) = (Z)-2-methylaminoacrylate + NH4(+) + CO2. Functionally, hydrolyzes ureidoacrylate to form aminoacrylate and carbamate. The carbamate hydrolyzes spontaneously, thereby releasing one of the nitrogen atoms of the pyrimidine ring as ammonia and one of its carbon atoms as CO2. This Caulobacter vibrioides (strain ATCC 19089 / CIP 103742 / CB 15) (Caulobacter crescentus) protein is Ureidoacrylate amidohydrolase RutB.